We begin with the raw amino-acid sequence, 162 residues long: Cyanate hydratase (162 aa).

Active-site residues include arginine 90, glutamate 93, and serine 116.

The protein belongs to the cyanase family.

It catalyses the reaction cyanate + hydrogencarbonate + 3 H(+) = NH4(+) + 2 CO2. Functionally, catalyzes the reaction of cyanate with bicarbonate to produce ammonia and carbon dioxide. The polypeptide is Cyanate hydratase (Populus trichocarpa (Western balsam poplar)).